Reading from the N-terminus, the 557-residue chain is Glucose-6-phosphate isomerase (557 aa).

Glu-361 acts as the Proton donor in catalysis. Residues His-392 and Lys-520 contribute to the active site.

This sequence belongs to the GPI family.

The protein localises to the cytoplasm. The catalysed reaction is alpha-D-glucose 6-phosphate = beta-D-fructose 6-phosphate. Its pathway is carbohydrate biosynthesis; gluconeogenesis. It functions in the pathway carbohydrate degradation; glycolysis; D-glyceraldehyde 3-phosphate and glycerone phosphate from D-glucose: step 2/4. In terms of biological role, catalyzes the reversible isomerization of glucose-6-phosphate to fructose-6-phosphate. The sequence is that of Glucose-6-phosphate isomerase from Acinetobacter baylyi (strain ATCC 33305 / BD413 / ADP1).